The chain runs to 50 residues: F420-non-reducing hydrogenase vhu subunit U (50 aa).

Ni(2+)-binding residues include Sec27 and Cys30. Residue Sec27 is a non-standard amino acid, selenocysteine. The propeptide at 34 to 50 (IIVKDEKGNKIIEVIKE) is removed in mature form.

Belongs to the [NiFe]/[NiFeSe] hydrogenase large subunit family. The F420-non-reducing hydrogenase vhu is composed of four subunits; VhuA, VhuD, VhuG and VhuU. The cofactor is Ni(2+).

The polypeptide is F420-non-reducing hydrogenase vhu subunit U (vhuU) (Methanocaldococcus jannaschii (strain ATCC 43067 / DSM 2661 / JAL-1 / JCM 10045 / NBRC 100440) (Methanococcus jannaschii)).